We begin with the raw amino-acid sequence, 190 residues long: ATP synthase subunit b 1 (190 aa).

The chain crosses the membrane as a helical span at residues Asp-35–Pro-55.

The protein belongs to the ATPase B chain family. In terms of assembly, F-type ATPases have 2 components, F(1) - the catalytic core - and F(0) - the membrane proton channel. F(1) has five subunits: alpha(3), beta(3), gamma(1), delta(1), epsilon(1). F(0) has three main subunits: a(1), b(2) and c(10-14). The alpha and beta chains form an alternating ring which encloses part of the gamma chain. F(1) is attached to F(0) by a central stalk formed by the gamma and epsilon chains, while a peripheral stalk is formed by the delta and b chains.

Its subcellular location is the cell inner membrane. Its function is as follows. F(1)F(0) ATP synthase produces ATP from ADP in the presence of a proton or sodium gradient. F-type ATPases consist of two structural domains, F(1) containing the extramembraneous catalytic core and F(0) containing the membrane proton channel, linked together by a central stalk and a peripheral stalk. During catalysis, ATP synthesis in the catalytic domain of F(1) is coupled via a rotary mechanism of the central stalk subunits to proton translocation. In terms of biological role, component of the F(0) channel, it forms part of the peripheral stalk, linking F(1) to F(0). This chain is ATP synthase subunit b 1, found in Jannaschia sp. (strain CCS1).